We begin with the raw amino-acid sequence, 218 residues long: 7-cyano-7-deazaguanine synthase (218 aa).

10 to 20 (FSGGQDSTTCL) provides a ligand contact to ATP. 4 residues coordinate Zn(2+): Cys-186, Cys-195, Cys-198, and Cys-201.

This sequence belongs to the QueC family. As to quaternary structure, homodimer. Zn(2+) is required as a cofactor.

The catalysed reaction is 7-carboxy-7-deazaguanine + NH4(+) + ATP = 7-cyano-7-deazaguanine + ADP + phosphate + H2O + H(+). It functions in the pathway purine metabolism; 7-cyano-7-deazaguanine biosynthesis. Functionally, catalyzes the ATP-dependent conversion of 7-carboxy-7-deazaguanine (CDG) to 7-cyano-7-deazaguanine (preQ(0)). The chain is 7-cyano-7-deazaguanine synthase from Exiguobacterium sibiricum (strain DSM 17290 / CCUG 55495 / CIP 109462 / JCM 13490 / 255-15).